The primary structure comprises 691 residues: NADH-ubiquinone oxidoreductase 75 kDa subunit (691 aa).

The 78-residue stretch at M1–L78 folds into the 2Fe-2S ferredoxin-type domain. [2Fe-2S] cluster-binding residues include C34, C45, C48, and C62. In terms of domain architecture, 4Fe-4S His(Cys)3-ligated-type spans L78 to G117. [4Fe-4S] cluster is bound by residues H94, C98, C101, C107, C146, C149, C152, and C196. The 57-residue stretch at L215–R271 folds into the 4Fe-4S Mo/W bis-MGD-type domain.

This sequence belongs to the complex I 75 kDa subunit family. In terms of assembly, complex I is composed of about 30 different subunits. The cofactor is [2Fe-2S] cluster. Requires [4Fe-4S] cluster as cofactor.

The protein resides in the mitochondrion inner membrane. It catalyses the reaction a ubiquinone + NADH + 5 H(+)(in) = a ubiquinol + NAD(+) + 4 H(+)(out). Core subunit of the mitochondrial membrane respiratory chain NADH dehydrogenase (Complex I) that is believed to belong to the minimal assembly required for catalysis. Complex I functions in the transfer of electrons from NADH to the respiratory chain. The immediate electron acceptor for the enzyme is believed to be ubiquinone. This is the largest subunit of complex I and it is a component of the iron-sulfur (IP) fragment of the enzyme. It may form part of the active site crevice where NADH is oxidized. This Reclinomonas americana protein is NADH-ubiquinone oxidoreductase 75 kDa subunit (NAD11).